Here is a 423-residue protein sequence, read N- to C-terminus: Serine hydroxymethyltransferase 2 (423 aa).

Residues Leu-121 and 125–127 (GHL) each bind (6S)-5,6,7,8-tetrahydrofolate. The residue at position 230 (Lys-230) is an N6-(pyridoxal phosphate)lysine. Position 356–358 (356–358 (SPF)) interacts with (6S)-5,6,7,8-tetrahydrofolate.

It belongs to the SHMT family. In terms of assembly, homodimer. Pyridoxal 5'-phosphate serves as cofactor.

Its subcellular location is the cytoplasm. The enzyme catalyses (6R)-5,10-methylene-5,6,7,8-tetrahydrofolate + glycine + H2O = (6S)-5,6,7,8-tetrahydrofolate + L-serine. It functions in the pathway one-carbon metabolism; tetrahydrofolate interconversion. It participates in amino-acid biosynthesis; glycine biosynthesis; glycine from L-serine: step 1/1. Functionally, catalyzes the reversible interconversion of serine and glycine with tetrahydrofolate (THF) serving as the one-carbon carrier. This reaction serves as the major source of one-carbon groups required for the biosynthesis of purines, thymidylate, methionine, and other important biomolecules. Also exhibits THF-independent aldolase activity toward beta-hydroxyamino acids, producing glycine and aldehydes, via a retro-aldol mechanism. The polypeptide is Serine hydroxymethyltransferase 2 (Pectobacterium atrosepticum (strain SCRI 1043 / ATCC BAA-672) (Erwinia carotovora subsp. atroseptica)).